The following is a 337-amino-acid chain: Secreted effector protein EspF(U) (337 aa).

5 tandem repeats follow at residues 96-142 (IKPA…AEHG), 143-189 (IQPA…AEHG), 190-236 (IQPA…AEHG), 237-283 (IQPA…AEHG), and 284-330 (IQPA…AEHG). Residues 96-330 (IKPARSMAEH…RLMQHLAEHG (235 aa)) are 5 X 48 AA approximate tandem repeats. Residues 291 to 312 (AEHIPPAPNWPAPTPPVQNEQS) are disordered. The segment covering 295-306 (PPAPNWPAPTPP) has biased composition (pro residues).

The protein belongs to the EspF(U)/TccP family. Interacts with host BAIAP2 and host WASL/N-WASP. Can also interact with host proteins BAIAP2L1 and WAS/WASP.

It localises to the secreted. The protein localises to the host cytoplasm. Functionally, required for efficient pedestal formation in host epithelial cells during infection. Acts as an intermediate between Tir (via host BAIAP2) and host WASL/N-WASP. Directly binds and activates WASL/N-WASP, which stimulates actin polymerization and leads to the formation of actin pedestals at the sites of bacterial adhesion. This Escherichia coli O157:H7 protein is Secreted effector protein EspF(U) (espF(U)).